The chain runs to 559 residues: Protein aurora borealis (559 aa).

The tract at residues 1–27 is disordered; it reads MGDVKESKMQITPETPGRIPVLNPFES. A phosphoserine mark is found at Ser-183, Ser-191, Ser-270, Ser-325, and Ser-331. Phosphothreonine is present on Thr-354.

Belongs to the BORA family. In terms of assembly, interacts with AURKA. Phosphorylated by AURKA.

In terms of biological role, required for the activation of AURKA at the onset of mitosis. The polypeptide is Protein aurora borealis (BORA) (Homo sapiens (Human)).